Consider the following 319-residue polypeptide: Coproporphyrin III ferrochelatase (319 aa).

Fe(2+)-binding residues include histidine 193 and glutamate 274.

Belongs to the ferrochelatase family.

It localises to the cytoplasm. It catalyses the reaction Fe-coproporphyrin III + 2 H(+) = coproporphyrin III + Fe(2+). It participates in porphyrin-containing compound metabolism; protoheme biosynthesis. Involved in coproporphyrin-dependent heme b biosynthesis. Catalyzes the insertion of ferrous iron into coproporphyrin III to form Fe-coproporphyrin III. The sequence is that of Coproporphyrin III ferrochelatase from Streptococcus mutans serotype c (strain ATCC 700610 / UA159).